The primary structure comprises 264 residues: Potassium channel regulatory protein (264 aa).

One can recognise a BTB domain in the interval 5-74 (DLVTLNVGGR…LRNHELLLPS (70 aa)).

Can form homooligomers. Interacts with KCNA1 (via cytoplasmic N-terminal domain) and KCNA4.

The protein resides in the endoplasmic reticulum. Inhibits potassium fluxes in cells. May regulate Kv1 family channel proteins by retaining a fraction of channels in endomembranes. The sequence is that of Potassium channel regulatory protein (Kcnrg) from Mus musculus (Mouse).